The following is a 380-amino-acid chain: tRNA pseudouridine synthase B (380 aa).

D63 serves as the catalytic Nucleophile. Positions 309–339 (QNVEDDNDDNDDNDDNDDNDDNDDNDDNDDN) are disordered. The segment covering 311-338 (VEDDNDDNDDNDDNDDNDDNDDNDDNDD) has biased composition (acidic residues).

The protein belongs to the pseudouridine synthase TruB family. Type 1 subfamily.

The catalysed reaction is uridine(55) in tRNA = pseudouridine(55) in tRNA. In terms of biological role, responsible for synthesis of pseudouridine from uracil-55 in the psi GC loop of transfer RNAs. The chain is tRNA pseudouridine synthase B from Psychrobacter arcticus (strain DSM 17307 / VKM B-2377 / 273-4).